The primary structure comprises 257 residues: Aspartate/glutamate leucyltransferase (257 aa).

The protein belongs to the R-transferase family. Bpt subfamily.

The protein resides in the cytoplasm. The catalysed reaction is N-terminal L-glutamyl-[protein] + L-leucyl-tRNA(Leu) = N-terminal L-leucyl-L-glutamyl-[protein] + tRNA(Leu) + H(+). The enzyme catalyses N-terminal L-aspartyl-[protein] + L-leucyl-tRNA(Leu) = N-terminal L-leucyl-L-aspartyl-[protein] + tRNA(Leu) + H(+). Functionally, functions in the N-end rule pathway of protein degradation where it conjugates Leu from its aminoacyl-tRNA to the N-termini of proteins containing an N-terminal aspartate or glutamate. This Sphingopyxis alaskensis (strain DSM 13593 / LMG 18877 / RB2256) (Sphingomonas alaskensis) protein is Aspartate/glutamate leucyltransferase.